A 482-amino-acid polypeptide reads, in one-letter code: Probable metalloreductase AIM14 (482 aa).

Helical transmembrane passes span 16–36 (VKYG…VATV), 50–70 (SLPW…LGVW), 87–106 (GRMA…KYWP), 123–143 (IIVV…FVEG), 155–175 (LLGV…VALF), 182–202 (LFYV…LFHA), and 205–225 (PVTL…FIKF). The Ferric oxidoreductase domain occupies 86–198 (FGRMAYCLLP…ITIGMFVVLI (113 aa)). Residues 225–348 (FQTYSATPVS…GGSGISLAIP (124 aa)) enclose the FAD-binding FR-type domain.

It belongs to the ferric reductase (FRE) family. AIM14 subfamily.

It is found in the membrane. In terms of biological role, probable cell surface metalloreductase. May be involved in iron or copper homeostasis. This chain is Probable metalloreductase AIM14 (AIM14), found in Meyerozyma guilliermondii (strain ATCC 6260 / CBS 566 / DSM 6381 / JCM 1539 / NBRC 10279 / NRRL Y-324) (Yeast).